A 73-amino-acid chain; its full sequence is Cell division protein ZapB (73 aa).

Residues 3–67 (LELLSKLETK…WNDKVTGLVG (65 aa)) adopt a coiled-coil conformation.

The protein belongs to the ZapB family. Homodimer. The ends of the coiled-coil dimer bind to each other, forming polymers. Interacts with FtsZ.

It localises to the cytoplasm. In terms of biological role, non-essential, abundant cell division factor that is required for proper Z-ring formation. It is recruited early to the divisome by direct interaction with FtsZ, stimulating Z-ring assembly and thereby promoting cell division earlier in the cell cycle. Its recruitment to the Z-ring requires functional FtsA or ZipA. The polypeptide is Cell division protein ZapB (Shewanella sp. (strain ANA-3)).